A 597-amino-acid chain; its full sequence is uncharacterized protein (597 aa).

2 helical membrane-spanning segments follow: residues 4–23 and 209–231; these read LLLALLLCLAVGTAGGFKIV and FVSVSAPGFVGVTAAMSSAGIAI.

Its subcellular location is the cell membrane. This is an uncharacterized protein from Archaeoglobus fulgidus (strain ATCC 49558 / DSM 4304 / JCM 9628 / NBRC 100126 / VC-16).